Here is a 151-residue protein sequence, read N- to C-terminus: UPF0208 membrane protein KPN78578_26420 (151 aa).

Helical transmembrane passes span 46–65 (YAIR…QIAL) and 69–91 (LGPA…WWLG).

This sequence belongs to the UPF0208 family.

Its subcellular location is the cell inner membrane. The sequence is that of UPF0208 membrane protein KPN78578_26420 from Klebsiella pneumoniae subsp. pneumoniae (strain ATCC 700721 / MGH 78578).